The primary structure comprises 449 residues: L-lysine-epsilon aminotransferase (449 aa).

Residues glycine 128 and alanine 129 each contribute to the pyridoxal 5'-phosphate site. Residues arginine 170 and glutamine 274 each coordinate 2-oxoglutarate. Arginine 170 is an L-lysine binding site. Glutamine 274 serves as a coordination point for pyridoxal 5'-phosphate. Lysine 300 is subject to N6-(pyridoxal phosphate)lysine. Arginine 422 contributes to the 2-oxoglutarate binding site.

This sequence belongs to the class-III pyridoxal-phosphate-dependent aminotransferase family. Pyridoxal 5'-phosphate is required as a cofactor.

It catalyses the reaction L-lysine + 2-oxoglutarate = (S)-2-amino-6-oxohexanoate + L-glutamate. In terms of biological role, catalyzes the transfer of the terminal amino group of L-lysine to alpha-ketoglutarate to yield L-glutamate and 2-aminoadipate 6-semialdehyde ((S)-2-amino-6-oxohexanoate), which is spontaneously converted to the dehydrated form 1-piperideine 6-carboxylate. This Mycobacterium bovis (strain ATCC BAA-935 / AF2122/97) protein is L-lysine-epsilon aminotransferase.